We begin with the raw amino-acid sequence, 66 residues long: Conotoxin mr5.2 (66 aa).

An N-terminal signal peptide occupies residues 1-19 (MRCVPVFVILLLLIASAPT). Residues 20 to 48 (VDAQLKTKDDMPLASFHANVKRTLQILRD) constitute a propeptide that is removed on maturation. 2 positions are modified to 4-carboxyglutamate: Glu-57 and Glu-61. Asn-65 carries the asparagine amide modification.

In terms of processing, contains 2 disulfide bonds that can be either 'C1-C3, C2-C4' or 'C1-C4, C2-C3', since these disulfide connectivities have been observed for conotoxins with cysteine framework V (for examples, see AC P0DQQ7 and AC P81755). Expressed by the venom duct.

It localises to the secreted. The chain is Conotoxin mr5.2 from Conus marmoreus (Marble cone).